The following is a 152-amino-acid chain: Clitocypin-5 (152 aa).

In terms of assembly, homodimer.

Its function is as follows. Binds and inhibits cysteine proteinases. Inhibits most strongly papain and cathepsin L, more weakly bromelain and cathepsin B while it is completely ineffective against cathepsin H. The sequence is that of Clitocypin-5 (clt5) from Clitocybe nebularis (Clouded agaric).